Consider the following 185-residue polypeptide: Adenylyl-sulfate kinase (185 aa).

13–20 (GLSGAGKT) serves as a coordination point for ATP. The Phosphoserine intermediate role is filled by S87.

Belongs to the APS kinase family.

The enzyme catalyses adenosine 5'-phosphosulfate + ATP = 3'-phosphoadenylyl sulfate + ADP + H(+). It functions in the pathway sulfur metabolism; hydrogen sulfide biosynthesis; sulfite from sulfate: step 2/3. In terms of biological role, catalyzes the synthesis of activated sulfate. This is Adenylyl-sulfate kinase from Halothermothrix orenii (strain H 168 / OCM 544 / DSM 9562).